Consider the following 555-residue polypeptide: Hydroxylamine reductase (555 aa).

Residues C3, C6, C18, and C25 each contribute to the [4Fe-4S] cluster site. Residues H252, E276, C320, C407, C435, C460, E494, and K496 each contribute to the hybrid [4Fe-2O-2S] cluster site. C407 carries the cysteine persulfide modification.

The protein belongs to the HCP family. The cofactor is [4Fe-4S] cluster. Requires hybrid [4Fe-2O-2S] cluster as cofactor.

It localises to the cytoplasm. The enzyme catalyses A + NH4(+) + H2O = hydroxylamine + AH2 + H(+). Catalyzes the reduction of hydroxylamine to form NH(3) and H(2)O. The polypeptide is Hydroxylamine reductase (Burkholderia lata (strain ATCC 17760 / DSM 23089 / LMG 22485 / NCIMB 9086 / R18194 / 383)).